A 174-amino-acid chain; its full sequence is Variant surface antigen B (174 aa).

An N-terminal signal peptide occupies residues 1 to 29 (MKKSIFSKKLLVSFGSLVALASIPLIAIS). Cysteine 30 is lipidated: N-palmitoyl cysteine. Cysteine 30 carries the S-diacylglycerol cysteine lipid modification. A disordered region spans residues 32-174 (QTNTDKSQQP…SQDSGNGSTK (143 aa)). Low complexity predominate over residues 38–49 (SQQPGSGSSTSG). Residues 50–75 (GQSGTGLGSGTTTGGQSGTTTGGRSG) show a composition bias toward gly residues. The segment covering 76-97 (SGSSSSTTGGQTGTGSDSQDSG) has biased composition (low complexity). 7 repeat units span residues 88-99 (GTGSDSQDSGAK), 100-111 (GTGSDSQDSGAK), 112-123 (GTGSDSQDSGAK), 124-135 (GTGSDSQDSGAK), 136-147 (GTGSDSQDSGAK), 148-159 (GTGSDSQDSGAK), and 160-171 (GTGSDSQDSGNG). Residues 88–171 (GTGSDSQDSG…GSDSQDSGNG (84 aa)) form a 7 X 12 AA tandem repeats region. The span at 102–174 (GSDSQDSGAK…SQDSGNGSTK (73 aa)) shows a compositional bias: polar residues.

The protein localises to the cell membrane. In terms of biological role, responsible for the antigenic diversity for host adaptation. The protein is Variant surface antigen B (vlpB) of Mesomycoplasma hyorhinis (Mycoplasma hyorhinis).